We begin with the raw amino-acid sequence, 899 residues long: Auxin response factor 25 (899 aa).

The tract at residues 1–20 (MKLSPPASADMPQALPENDG) is disordered. Positions 132–234 (FCKTLTASDT…QLLLGIRRAN (103 aa)) form a DNA-binding region, TF-B3. The span at 546-564 (RQHVLQEQSSQEMQQQLPS) shows a compositional bias: low complexity. Positions 546-586 (RQHVLQEQSSQEMQQQLPSSDHHVADVASESGSAPQAQSSL) are disordered. The span at 575 to 586 (ESGSAPQAQSSL) shows a compositional bias: polar residues. Residues 766-850 (ATFVKVYKSG…WCIKILSPQE (85 aa)) form the PB1 domain.

This sequence belongs to the ARF family. As to quaternary structure, homodimers and heterodimers. As to expression, expressed in roots, culms, leaves and young panicles.

The protein resides in the nucleus. In terms of biological role, auxin response factors (ARFs) are transcriptional factors that bind specifically to the DNA sequence 5'-TGTCTC-3' found in the auxin-responsive promoter elements (AuxREs). The chain is Auxin response factor 25 (ARF25) from Oryza sativa subsp. japonica (Rice).